Reading from the N-terminus, the 241-residue chain is Small ribosomal subunit protein uS2 (241 aa).

Belongs to the universal ribosomal protein uS2 family.

This chain is Small ribosomal subunit protein uS2, found in Salmonella choleraesuis (strain SC-B67).